A 78-amino-acid chain; its full sequence is Large ribosomal subunit protein bL28 (78 aa).

The protein belongs to the bacterial ribosomal protein bL28 family.

The polypeptide is Large ribosomal subunit protein bL28 (Flavobacterium johnsoniae (strain ATCC 17061 / DSM 2064 / JCM 8514 / BCRC 14874 / CCUG 350202 / NBRC 14942 / NCIMB 11054 / UW101) (Cytophaga johnsonae)).